Here is an 830-residue protein sequence, read N- to C-terminus: MSASSSGGSPRFPSCGKNGVTSLTQKKVLRTPCGAPSVTVTKSHKRGMKGDTVNVRRSVRVKTKVPWMPPGKSSARHVGCKWENPPHCLEITPPSSEKLVSVMRLSDLSTEDDDSGHCKMNRYDKKIDSLMNAVGCLKSEVKMQKGERQMAKRFLEERKEELEEVAHELAETEHENTVLRHNIERIKEEKDFTMLQKKHLQQEKECLMSKLVEAEMDGAAAAKQVMALKDTIGKLKTEKQMTCTDINTLTRQKELLLQKLSTFEETNRTLRDLLREQHCKEDSERLMEQQGTLLKRLAEADSEKARLLLLLQDKDKEVEELLQEIQCEKAQAKTASELSKSMESMRGHLQAQLRCKEAENSRLCMQIKNLERSGNQHKAEVEAIMEQLKELKQKGDRDKETLKKAIRAQKERAEKSEEYAEQLHVQLADKDLYVAEALSTLESWRSRYNQVVKDKGDLELEIIVLNDRVTDLVNQQQSLEEKMREDRDSLVERLHRQTAEYSAFKLENERLKASFAPMEDKLNQAHLEVQQLKASVKNYEGMIDNYKSQVMKTRLEADEVAAQLERCDKENKMLKDEMNKEIEAARRQFQSQLADLQQLPDILKITEAKLAECQDQLQGYERKNIDLTAIISDLRSRIEHQGDKLEMAREKHQASQKENKQLSQKVDELERKLEATSAQNVEFLQVIAKREEAIHQAQLRLEEKTRECGSLARQLESAIEDARRQVEQTKEQALSKERAAQSKILDLETQLSRTKTELGQLRRTRDDADRRYQSRLQDLKDRLEQSESTNRSMQNYVQFLKASYANVFGDAPYTSSYLTSSPIRSRSPPA.

Residues Ser-73 and Ser-74 each carry the phosphoserine modification. The residue at position 92 (Thr-92) is a Phosphothreonine. Residue Ser-95 is modified to Phosphoserine; by TSSK4. Residues Ser-106 and Ser-109 each carry the phosphoserine modification. Thr-110 is subject to Phosphothreonine. Residues Ser-115 and Ser-129 each carry the phosphoserine modification. Lys-138 participates in a covalent cross-link: Glycyl lysine isopeptide (Lys-Gly) (interchain with G-Cter in SUMO2). Residue Ser-139 is modified to Phosphoserine. Positions 144–217 (QKGERQMAKR…MSKLVEAEMD (74 aa)) form a coiled coil. Thr-231 carries the post-translational modification Phosphothreonine. 2 coiled-coil regions span residues 245–423 (DINT…AEQL) and 461–798 (EIIV…NYVQ). 2 positions are modified to phosphoserine: Ser-261 and Ser-632. An interaction with BBOF1 region spans residues 537–701 (KNYEGMIDNY…EAIHQAQLRL (165 aa)).

This sequence belongs to the ODF2 family. Self-associates. Associates with microtubules and forms a fibrillar structure partially linked to the microtubule network. Interacts via its C-terminus with PLK1. Interacts with ODF1. Interacts with MARK4; the interaction is required for localization of ODF2 to centrioles. Interacts with TSSK4. Interacts with AKNA. Interacts with CFAP58. Interacts with BBOF1. Interacts with CCDC38. Interacts with CCDC42. In terms of processing, tyrosine phosphorylated. Phosphorylated on Ser-95 by TSSK4. In terms of tissue distribution, testis-specific (at protein level). Expressed in spermatids at tubular stage V of the spermatogenic cycle. Highly expressed in the cytoplasm of elongating spermatids (tubular stages X/XI). In step 14/15 spermatids of tubular stage III/IV low expression detected. No expression detected in other testicular cells as well as the early round of spermatids.

The protein resides in the cytoplasm. It is found in the cytoskeleton. It localises to the microtubule organizing center. Its subcellular location is the centrosome. The protein localises to the cell projection. The protein resides in the cilium. It is found in the centriole. It localises to the spindle pole. Its subcellular location is the flagellum. In terms of biological role, seems to be a major component of sperm tail outer dense fibers (ODF). ODFs are filamentous structures located on the outside of the axoneme in the midpiece and principal piece of the mammalian sperm tail and may help to maintain the passive elastic structures and elastic recoil of the sperm tail. May have a modulating influence on sperm motility. Functions as a general scaffold protein that is specifically localized at the distal/subdistal appendages of mother centrioles. Component of the centrosome matrix required for the localization of PLK1 and NIN to the centrosomes. Required for the formation and/or maintenance of normal CETN1 assembly. This Mus musculus (Mouse) protein is Outer dense fiber protein 2 (Odf2).